The primary structure comprises 439 residues: Proline--tRNA ligase (439 aa).

It belongs to the class-II aminoacyl-tRNA synthetase family. ProS type 2 subfamily. As to quaternary structure, homodimer.

The protein resides in the cytoplasm. The catalysed reaction is tRNA(Pro) + L-proline + ATP = L-prolyl-tRNA(Pro) + AMP + diphosphate. Functionally, catalyzes the attachment of proline to tRNA(Pro) in a two-step reaction: proline is first activated by ATP to form Pro-AMP and then transferred to the acceptor end of tRNA(Pro). The polypeptide is Proline--tRNA ligase (Phenylobacterium zucineum (strain HLK1)).